Here is a 514-residue protein sequence, read N- to C-terminus: L-Threonine dehydratase biosynthetic IlvA (514 aa).

K62 carries the N6-(pyridoxal phosphate)lysine modification. Residues N89, 188–192 (GGGGL), and S315 each bind pyridoxal 5'-phosphate. 2 ACT-like domains span residues 339-411 (ALLA…DLSD) and 434-504 (RLYS…DESN).

It belongs to the serine/threonine dehydratase family. As to quaternary structure, homotetramer. Pyridoxal 5'-phosphate is required as a cofactor.

The enzyme catalyses L-threonine = 2-oxobutanoate + NH4(+). It functions in the pathway amino-acid biosynthesis; L-isoleucine biosynthesis; 2-oxobutanoate from L-threonine: step 1/1. Its activity is regulated as follows. Isoleucine allosterically inhibits whereas valine allosterically activates this enzyme. In terms of biological role, catalyzes the anaerobic formation of alpha-ketobutyrate and ammonia from threonine in a two-step reaction. The first step involved a dehydration of threonine and a production of enamine intermediates (aminocrotonate), which tautomerizes to its imine form (iminobutyrate). Both intermediates are unstable and short-lived. The second step is the nonenzymatic hydrolysis of the enamine/imine intermediates to form 2-ketobutyrate and free ammonia. In the low water environment of the cell, the second step is accelerated by RidA. This chain is L-Threonine dehydratase biosynthetic IlvA (ilvA), found in Salmonella typhimurium (strain LT2 / SGSC1412 / ATCC 700720).